A 543-amino-acid chain; its full sequence is CTP synthase (543 aa).

Residues 1–265 (MARYIFITGG…DEEVLAAFGI (265 aa)) are amidoligase domain. Residue Ser-13 participates in CTP binding. Ser-13 contributes to the UTP binding site. An ATP-binding site is contributed by 14–19 (SLGKGL). Position 54 (Tyr-54) interacts with L-glutamine. Asp-71 is a binding site for ATP. Asp-71 and Glu-139 together coordinate Mg(2+). CTP-binding positions include 146–148 (DIE), 186–191 (KTKPTQ), and Lys-222. Residues 186-191 (KTKPTQ) and Lys-222 each bind UTP. 238 to 240 (RDA) contacts ATP. A Glutamine amidotransferase type-1 domain is found at 291 to 542 (TIAIVGKYTG…IEAAMAQSRL (252 aa)). Position 353 (Gly-353) interacts with L-glutamine. The Nucleophile; for glutamine hydrolysis role is filled by Cys-380. L-glutamine-binding positions include 381–384 (FGMQ), Glu-404, and Arg-470. Catalysis depends on residues His-515 and Glu-517.

Belongs to the CTP synthase family. As to quaternary structure, homotetramer.

The enzyme catalyses UTP + L-glutamine + ATP + H2O = CTP + L-glutamate + ADP + phosphate + 2 H(+). It carries out the reaction L-glutamine + H2O = L-glutamate + NH4(+). The catalysed reaction is UTP + NH4(+) + ATP = CTP + ADP + phosphate + 2 H(+). It participates in pyrimidine metabolism; CTP biosynthesis via de novo pathway; CTP from UDP: step 2/2. Its activity is regulated as follows. Allosterically activated by GTP, when glutamine is the substrate; GTP has no effect on the reaction when ammonia is the substrate. The allosteric effector GTP functions by stabilizing the protein conformation that binds the tetrahedral intermediate(s) formed during glutamine hydrolysis. Inhibited by the product CTP, via allosteric rather than competitive inhibition. In terms of biological role, catalyzes the ATP-dependent amination of UTP to CTP with either L-glutamine or ammonia as the source of nitrogen. Regulates intracellular CTP levels through interactions with the four ribonucleotide triphosphates. This chain is CTP synthase, found in Rhodopseudomonas palustris (strain BisA53).